Reading from the N-terminus, the 335-residue chain is Phosphate acyltransferase (335 aa).

The protein belongs to the PlsX family. In terms of assembly, homodimer. Probably interacts with PlsY.

It localises to the cytoplasm. It carries out the reaction a fatty acyl-[ACP] + phosphate = an acyl phosphate + holo-[ACP]. The protein operates within lipid metabolism; phospholipid metabolism. Catalyzes the reversible formation of acyl-phosphate (acyl-PO(4)) from acyl-[acyl-carrier-protein] (acyl-ACP). This enzyme utilizes acyl-ACP as fatty acyl donor, but not acyl-CoA. The chain is Phosphate acyltransferase from Clostridium botulinum (strain Langeland / NCTC 10281 / Type F).